A 157-amino-acid polypeptide reads, in one-letter code: uncharacterized protein (157 aa).

One can recognise an HD domain in the interval 33–134 (NLKHFLDVAR…MYRADKLSRL (102 aa)).

This is an uncharacterized protein from Clostridium beijerinckii (strain ATCC 51743 / NCIMB 8052) (Clostridium acetobutylicum).